The primary structure comprises 419 residues: G-protein coupled receptor 151 (419 aa).

Residues 1 to 41 (MLAAAFADSNSSSMNVSFAHLHFAGGYLPSDSQDWRTIIPA) are Extracellular-facing. N10 and N15 each carry an N-linked (GlcNAc...) asparagine glycan. Residues 42–62 (LLVAVCLVGFVGNLCVIGILL) form a helical membrane-spanning segment. Residues 63 to 71 (HNAWKGKPS) are Cytoplasmic-facing. The chain crosses the membrane as a helical span at residues 72 to 92 (MIHSLILNLSLADLSLLLFSA). The Extracellular segment spans residues 93-116 (PIRATAYSKSVWDLGWFVCKSSDW). C111 and C187 are disulfide-bonded. The chain crosses the membrane as a helical span at residues 117 to 137 (FIHTCMAAKSLTIVVVAKVCF). The Cytoplasmic segment spans residues 138–153 (MYASDPAKQVSIHNYT). Residues 154 to 174 (IWSVLVAIWTVASLLPLPEWF) form a helical membrane-spanning segment. Over 175-201 (FSTIRHHEGVEMCLVDVPAVAEEFMSM) the chain is Extracellular. A helical transmembrane segment spans residues 202-222 (FGKLYPLLAFGLPLFFASFYF). The Cytoplasmic segment spans residues 223 to 252 (WRAYDQCKKRGTKTQNLRNQIRSKQVTVML). The chain crosses the membrane as a helical span at residues 253-273 (LSIAIISALLWLPEWVAWLWV). Residues 274–286 (WHLKAAGPAPPQG) lie on the Extracellular side of the membrane. Residues 287–307 (FIALSQVLMFSISSANPLIFL) form a helical membrane-spanning segment. At 308-419 (VMSEEFREGL…EDQETGEGVK (112 aa)) the chain is on the cytoplasmic side. The segment at 330-419 (PTVSESQETP…EDQETGEGVK (90 aa)) is disordered. Polar residues predominate over residues 332 to 341 (VSESQETPAG). Residues 410–419 (EDQETGEGVK) are compositionally biased toward acidic residues.

The protein belongs to the G-protein coupled receptor 1 family. As to expression, high expression in the spinal cord.

It is found in the cell membrane. Its function is as follows. Proton-sensing G-protein coupled receptor. This chain is G-protein coupled receptor 151 (GPR151), found in Homo sapiens (Human).